Reading from the N-terminus, the 473-residue chain is MNDYIRVNCTELRWPELVCAEPGSNSRGHSPPFHIANASITQLKAIDLLFLIDFSISKIMESLLQLETALRAVVEETKRPNAAAAFASLRRADPNNDPALTAVASRVVDLASEVTQLLEPAYLALADHLFGYQHTQCLAAVVELRIPDYLASGPQTFEQLSISSGTRRDRLRQVLRLLYNNGVFSYDAESDSVRNNEASEMLKQDHWTQWHRWASVCSKQFYQMAQGLPRAMSAGVTRSPAQVHYDTDESMFSYLERNGTMVQLRECMGAAAIAQTPGMITGYPWAELSNHTLFDLGGGDGSLIAGLLRAIPTLQGGIMDTPRVLPFLQEAFHHPSSKYADVALRIPPERVIAGDFLQEVIPSEAYVMRWCLHDWNDEQACQILRNIRRSIINSPVSRLIVLESVLADGRWGRMSRLGDINVMVTAEHGQERTETQWRQLAACTGWKVVSITQLPGAWPSAIDMRPVERPENV.

S-adenosyl-L-methionine contacts are provided by residues aspartate 320 and 354–356; that span reads GDF. The active-site Proton acceptor is the histidine 373.

This sequence belongs to the class I-like SAM-binding methyltransferase superfamily. Cation-independent O-methyltransferase family. COMT subfamily.

It participates in mycotoxin biosynthesis. Its function is as follows. O-methyltransferase; part of the gene cluster that mediates the biosynthesis of aspirochlorine (or antibiotic A30641), an unusual halogenated spiro compound with distinctive antifungal properties due to selective inhibition of protein biosynthesis, and which is also active against bacteria, viruses, and murine tumor cells. The non-ribosomal peptide synthetase (NRPS) aclP is responsible the formation of the diketopiperazine (DKP) core from the condensation of 2 phenylalanine residues. One Phe residue is tailored into chlorotyrosine by hydroxylation and chlorination, whereas the second Phe undergoes an unprecedented C-C bond cleavage to be converted into glycine. After formation of the DKP, sulfur is incorporated into the DKP by conjugation with glutathione by aclG, followed by its stepwise degradation to the thiol by aclI, aclJ and aclK, and the dithiol oxidation by aclT. In addition, oxygenases (aclB, aclC, aclL and aclO) and O-methyltransferases (aclM and aclU) act as tailoring enzymes to produce the intermediate dechloroaspirochlorine. Ultimately, chlorination of dechloroaspirochlorine by the halogenase aclH is the last step in the aspirochlorine pathway. In Aspergillus oryzae (strain ATCC 42149 / RIB 40) (Yellow koji mold), this protein is O-methyltransferase aclU.